Here is a 314-residue protein sequence, read N- to C-terminus: MPIRIDKKLPAVEILRTENIFVMDDQRAAHQDIRPLKILILNLMPQKMVTETQLLRHLANTPLQLDIDFLYMESHRSKTTRSEHMETFYKTFPEVKDEYFDGMIITGAPVEHLPFEEVDYWEEFTQVLEWSKTHVYSTLHICWGAQAGLYLRYGVEKYQMDSKLSGIYPQDTLKEGHLLFRGFDDSYVSPHSRHTEISKEEILNKTNLEILSEGPQVGVSILASRDLREIYSFGHLEYDRDTLAKEYFRDCDAGLAPHIPENYFKDDDVNQTPCLCWSSSAALFFSNWVNYAVYQETPFDWRKIEDDASAYGYL.

The Acyl-thioester intermediate role is filled by Cys-142. The substrate site is built by Lys-163 and Ser-192. Residue His-235 is the Proton acceptor of the active site. Glu-237 is an active-site residue. Substrate is bound at residue Arg-249.

This sequence belongs to the MetA family.

It is found in the cytoplasm. It carries out the reaction L-homoserine + acetyl-CoA = O-acetyl-L-homoserine + CoA. The protein operates within amino-acid biosynthesis; L-methionine biosynthesis via de novo pathway; O-acetyl-L-homoserine from L-homoserine: step 1/1. Its function is as follows. Transfers an acetyl group from acetyl-CoA to L-homoserine, forming acetyl-L-homoserine. The chain is Homoserine O-acetyltransferase from Streptococcus pneumoniae (strain Taiwan19F-14).